The sequence spans 106 residues: MIPGEILPEDGEITLNAGRDTLTVEVTNTGDRPAQVGSHYHFYEVNDHLHFDREPTRGFRLDIAAGTAVRFEPGQSRTVQLVRYAGSGDIYGFQGRVMGPATGESA.

Belongs to the urease beta subunit family. In terms of assembly, heterotrimer of UreA (gamma), UreB (beta) and UreC (alpha) subunits. Three heterotrimers associate to form the active enzyme.

Its subcellular location is the cytoplasm. The catalysed reaction is urea + 2 H2O + H(+) = hydrogencarbonate + 2 NH4(+). It functions in the pathway nitrogen metabolism; urea degradation; CO(2) and NH(3) from urea (urease route): step 1/1. This is Urease subunit beta from Alkalilimnicola ehrlichii (strain ATCC BAA-1101 / DSM 17681 / MLHE-1).